The chain runs to 228 residues: Translin (228 aa).

Positions 86-90 (RFHEH) are DNA/RNA binding. Positions 177 to 198 (LDSGFRLLNLKNDSLRKRYDGL) are leucine-zipper. Lysine 187 carries the N6-acetyllysine modification. Serine 190 bears the Phosphoserine mark. Lysine 199 is subject to N6-acetyllysine.

It belongs to the translin family. As to quaternary structure, ring-shaped heterooctamer of six TSN and two TSNAX subunits, DNA/RNA binding occurs inside the ring.

It localises to the cytoplasm. It is found in the nucleus. Functionally, DNA-binding protein that specifically recognizes consensus sequences at the breakpoint junctions in chromosomal translocations, mostly involving immunoglobulin (Ig)/T-cell receptor gene segments. Seems to recognize single-stranded DNA ends generated by staggered breaks occurring at recombination hot spots. In terms of biological role, exhibits both single-stranded and double-stranded endoribonuclease activity. May act as an activator of RNA-induced silencing complex (RISC) by facilitating endonucleolytic cleavage of the siRNA passenger strand. The polypeptide is Translin (Tsn) (Mus musculus (Mouse)).